A 35-amino-acid polypeptide reads, in one-letter code: AAAISCVGSKECLPKCKAQGCKSGKCMNKKCKCYC.

Cystine bridges form between Cys6/Cys26, Cys12/Cys31, and Cys16/Cys33.

The protein belongs to the short scorpion toxin superfamily. Potassium channel inhibitor family. Alpha-KTx 23 subfamily. Expressed by the venom gland.

It localises to the secreted. In terms of biological role, selectively and irreversibly binds (K(d)=2.9 pM) and blocks Kv1.3/KCNA3 potassium channels of human T-lymphocytes. Weakly blocks Kv1.2/KCNA2 (9%). This is Potassium channel toxin alpha-KTx 23.2 from Vaejovis mexicanus smithi (Mexican scorpion).